We begin with the raw amino-acid sequence, 327 residues long: uncharacterized protein (327 aa).

The S4 RNA-binding domain occupies 12-84 (MRIDRYLTQQ…IPITILYEDD (73 aa)). The active site involves Asp-137.

The protein belongs to the pseudouridine synthase RluA family.

The catalysed reaction is a uridine in RNA = a pseudouridine in RNA. This is an uncharacterized protein from Chlorobaculum parvum (strain DSM 263 / NCIMB 8327) (Chlorobium vibrioforme subsp. thiosulfatophilum).